The sequence spans 119 residues: Large ribosomal subunit protein bL20 (119 aa).

The protein belongs to the bacterial ribosomal protein bL20 family.

Its function is as follows. Binds directly to 23S ribosomal RNA and is necessary for the in vitro assembly process of the 50S ribosomal subunit. It is not involved in the protein synthesizing functions of that subunit. The sequence is that of Large ribosomal subunit protein bL20 from Geobacillus thermodenitrificans (strain NG80-2).